The chain runs to 301 residues: Cell division protein kinase 2 homolog CRK1 (301 aa).

Positions 5 to 297 (YERQEKIGEG…AADALNHPYF (293 aa)) constitute a Protein kinase domain. ATP contacts are provided by residues 11 to 19 (IGEGTYGVV) and Lys-34. The active-site Proton acceptor is the Asp-127. Thr-160 is subject to Phosphothreonine; by CAK.

The protein belongs to the protein kinase superfamily. CMGC Ser/Thr protein kinase family. CDC2/CDKX subfamily. Forms a stable but non-covalent complex with a regulatory subunit and with a cyclin.

The catalysed reaction is [DNA-directed RNA polymerase] + ATP = phospho-[DNA-directed RNA polymerase] + ADP + H(+). Its activity is regulated as follows. Phosphorylation at Thr-15 or Tyr-16 inactivates the enzyme, while phosphorylation at Thr-160 activates it. May be involved in some stage-specific role in the promastigote cell cycle. This is Cell division protein kinase 2 homolog CRK1 (CRK1) from Leishmania mexicana.